The following is a 196-amino-acid chain: Pyridoxal 5'-phosphate synthase subunit PdxT (196 aa).

47–49 provides a ligand contact to L-glutamine; the sequence is GES. The Nucleophile role is filled by Cys79. Residues Arg106 and 134-135 contribute to the L-glutamine site; that span reads IR. Active-site charge relay system residues include His170 and Glu172.

This sequence belongs to the glutaminase PdxT/SNO family. In terms of assembly, in the presence of PdxS, forms a dodecamer of heterodimers. Only shows activity in the heterodimer.

The catalysed reaction is aldehydo-D-ribose 5-phosphate + D-glyceraldehyde 3-phosphate + L-glutamine = pyridoxal 5'-phosphate + L-glutamate + phosphate + 3 H2O + H(+). The enzyme catalyses L-glutamine + H2O = L-glutamate + NH4(+). The protein operates within cofactor biosynthesis; pyridoxal 5'-phosphate biosynthesis. In terms of biological role, catalyzes the hydrolysis of glutamine to glutamate and ammonia as part of the biosynthesis of pyridoxal 5'-phosphate. The resulting ammonia molecule is channeled to the active site of PdxS. The protein is Pyridoxal 5'-phosphate synthase subunit PdxT of Bacillus cereus (strain G9842).